The sequence spans 189 residues: Lipid A acyltransferase PagP (189 aa).

Residues 1 to 23 (MRLKLILYFLILSCYLGIGSARA) form the signal peptide. Residues H61, D104, and S105 contribute to the active site.

This sequence belongs to the lipid A palmitoyltransferase family. In terms of assembly, homodimer.

It is found in the cell outer membrane. The catalysed reaction is a lipid A + a 1,2-diacyl-sn-glycero-3-phosphocholine = a hepta-acyl lipid A + a 2-acyl-sn-glycero-3-phosphocholine. It catalyses the reaction a lipid IVA + a 1,2-diacyl-sn-glycero-3-phosphocholine = a lipid IVB + a 2-acyl-sn-glycero-3-phosphocholine. The enzyme catalyses a lipid IIA + a 1,2-diacyl-sn-glycero-3-phosphocholine = a lipid IIB + a 2-acyl-sn-glycero-3-phosphocholine. Transfers a fatty acid residue from the sn-1 position of a phospholipid to the N-linked hydroxyfatty acid chain on the proximal unit of lipid A or its precursors. In Erwinia tasmaniensis (strain DSM 17950 / CFBP 7177 / CIP 109463 / NCPPB 4357 / Et1/99), this protein is Lipid A acyltransferase PagP.